The primary structure comprises 120 residues: UPF0344 protein LMOf2365_2298 (120 aa).

4 consecutive transmembrane segments (helical) span residues 3–23 (GYIHLISWVAIVVLTVTALLI), 33–53 (MLQMINRVFYILVILSGIMMV), 62–82 (ILAIFKILMGIIVIGVVEMLL), and 92–112 (GMFLMIFVIVVVITISLGFYL).

It belongs to the UPF0344 family.

The protein resides in the cell membrane. The sequence is that of UPF0344 protein LMOf2365_2298 from Listeria monocytogenes serotype 4b (strain F2365).